We begin with the raw amino-acid sequence, 170 residues long: CASP-like protein 1F1 (170 aa).

Residues 1–16 (MMGDNEGRRTPLLNLG) lie on the Cytoplasmic side of the membrane. Residues 17–37 (VQVSMRVLIIGAAMASMWVMI) form a helical membrane-spanning segment. Residues 38–62 (TNREVASVYGIAFEAKYSYSSAFRY) are Extracellular-facing. Residues 63-83 (LVYAQIAVCAATLFTLVWACL) traverse the membrane as a helical segment. Topologically, residues 84-88 (AVRRR) are cytoplasmic. A helical membrane pass occupies residues 89–109 (GLVFALFFFDLLTTLTAISAF). The Extracellular segment spans residues 110–141 (SAAFAEGYVGKYGNKQAGWLPICGYVHVYCSR). Residues 142 to 162 (VTISLAMSFASFVLLFILTVL) traverse the membrane as a helical segment. Topologically, residues 163–170 (TASSARHY) are cytoplasmic.

It belongs to the Casparian strip membrane proteins (CASP) family. Homodimer and heterodimers.

The protein localises to the cell membrane. The protein is CASP-like protein 1F1 of Arabidopsis lyrata subsp. lyrata (Lyre-leaved rock-cress).